The sequence spans 64 residues: Large ribosomal subunit protein bL35 (64 aa).

It belongs to the bacterial ribosomal protein bL35 family.

This chain is Large ribosomal subunit protein bL35, found in Vibrio vulnificus (strain CMCP6).